The sequence spans 233 residues: Methylthioribulose-1-phosphate dehydratase (233 aa).

Position 91 (C91) interacts with substrate. 2 residues coordinate Zn(2+): H108 and H110. E137 acts as the Proton donor/acceptor in catalysis. A Zn(2+)-binding site is contributed by H194.

This sequence belongs to the aldolase class II family. MtnB subfamily. Zn(2+) is required as a cofactor.

It is found in the cytoplasm. The catalysed reaction is 5-(methylsulfanyl)-D-ribulose 1-phosphate = 5-methylsulfanyl-2,3-dioxopentyl phosphate + H2O. It functions in the pathway amino-acid biosynthesis; L-methionine biosynthesis via salvage pathway; L-methionine from S-methyl-5-thio-alpha-D-ribose 1-phosphate: step 2/6. In terms of biological role, catalyzes the dehydration of methylthioribulose-1-phosphate (MTRu-1-P) into 2,3-diketo-5-methylthiopentyl-1-phosphate (DK-MTP-1-P). This Phaeosphaeria nodorum (strain SN15 / ATCC MYA-4574 / FGSC 10173) (Glume blotch fungus) protein is Methylthioribulose-1-phosphate dehydratase.